Reading from the N-terminus, the 67-residue chain is LPS-assembly lipoprotein LptM (67 aa).

The N-terminal stretch at 1–19 is a signal peptide; that stretch reads MKNVFKALTVLLTLFSLTG. Cys-20 carries N-palmitoyl cysteine lipidation. Cys-20 is lipidated: S-diacylglycerol cysteine. The tract at residues 26-67 is disordered; sequence LYFPPADKNAPPPTKPVETQTQSTVPDKNDRATGDGPSQVNY. Positions 42–51 are enriched in polar residues; the sequence is VETQTQSTVP.

This sequence belongs to the LptM family. In terms of assembly, interacts with the outer membrane embedded portion of the LPS translocon formed by LptD and LptE (LptDE).

Its subcellular location is the cell outer membrane. Component of the lipopolysaccharide (LPS) transport (Lpt) pathway that promotes efficient assembly of the outer membrane LPS translocon (LptDE) by the BAM complex. Facilitates oxidative maturation of LptD by stabilizing a conformation of the LPS translocon in which LptD can efficiently acquire native disulfide bonds, thereby activating the LPS translocon. This Escherichia coli O157:H7 protein is LPS-assembly lipoprotein LptM.